We begin with the raw amino-acid sequence, 383 residues long: tRNA-specific 2-thiouridylase MnmA (383 aa).

ATP contacts are provided by residues Gly9 to Ser16 and Met35. The segment at Asn95 to Asp97 is interaction with target base in tRNA. Cys100 acts as the Nucleophile in catalysis. Cys100 and Cys196 form a disulfide bridge. Gly124 is a binding site for ATP. An interaction with tRNA region spans residues Lys146–Gln148. The active-site Cysteine persulfide intermediate is the Cys196. Positions Arg308–Tyr309 are interaction with tRNA.

This sequence belongs to the MnmA/TRMU family.

The protein localises to the cytoplasm. The catalysed reaction is S-sulfanyl-L-cysteinyl-[protein] + uridine(34) in tRNA + AH2 + ATP = 2-thiouridine(34) in tRNA + L-cysteinyl-[protein] + A + AMP + diphosphate + H(+). Catalyzes the 2-thiolation of uridine at the wobble position (U34) of tRNA, leading to the formation of s(2)U34. The chain is tRNA-specific 2-thiouridylase MnmA from Burkholderia pseudomallei (strain 1106a).